The sequence spans 449 residues: Biotin carboxylase (449 aa).

In terms of domain architecture, Biotin carboxylation spans 1–445; the sequence is MLDKIVIANR…NIHYLEKKLG (445 aa). Residues Lys116, Lys159, 165–166, 201–204, His209, and His236 each bind ATP; these read GG and EKYL. An ATP-grasp domain is found at 120-317; the sequence is IAAMKKAGVP…LIKEQLRIAA (198 aa). Lys238 contacts hydrogencarbonate. ATP contacts are provided by Glu276 and Glu288. Mg(2+) contacts are provided by Glu276, Glu288, and Asn290. Positions 276, 288, and 290 each coordinate Mn(2+). Positions 292, 295, and 338 each coordinate hydrogencarbonate. The active site involves Arg292. Arg338 is a binding site for biotin.

As to quaternary structure, acetyl-CoA carboxylase is a heterohexamer of biotin carboxyl carrier protein, biotin carboxylase and the two subunits of carboxyl transferase in a 2:2 complex. Requires Mg(2+) as cofactor. Mn(2+) serves as cofactor.

It carries out the reaction N(6)-biotinyl-L-lysyl-[protein] + hydrogencarbonate + ATP = N(6)-carboxybiotinyl-L-lysyl-[protein] + ADP + phosphate + H(+). Its pathway is lipid metabolism; malonyl-CoA biosynthesis; malonyl-CoA from acetyl-CoA: step 1/1. In terms of biological role, this protein is a component of the acetyl coenzyme A carboxylase complex; first, biotin carboxylase catalyzes the carboxylation of the carrier protein and then the transcarboxylase transfers the carboxyl group to form malonyl-CoA. This chain is Biotin carboxylase (accC), found in Escherichia coli O157:H7.